A 456-amino-acid chain; its full sequence is Equilibrative nucleoside transporter 2 (456 aa).

The chain crosses the membrane as a helical span at residues 13 to 33; that stretch reads LVGISFFILGLGTLLPWNFFI. An N-linked (GlcNAc...) asparagine glycan is attached at N56. 5 helical membrane-spanning segments follow: residues 69–89, 98–118, 123–143, 161–181, and 192–212; these read WVTL…SFLY, ILGS…LVKV, GLFF…CAVL, LFLS…LMSL, and LGYF…YLSL. The disordered stretch occupies residues 248 to 277; that stretch reads GVPISPQQASPTLDLDPEKEPEPEEPQKPG. S252 is subject to Phosphoserine. The span at 263–275 shows a compositional bias: basic and acidic residues; it reads DPEKEPEPEEPQK. 5 helical membrane-spanning segments follow: residues 288–308, 323–343, 360–380, 396–416, and 432–452; these read IWLT…VFPA, WGLF…DWLG, LLPL…LCHV, FITF…LTMC, and ALMT…SFLF.

This sequence belongs to the SLC29A/ENT transporter (TC 2.A.57) family.

The protein resides in the apical cell membrane. The protein localises to the basolateral cell membrane. It localises to the nucleus membrane. The enzyme catalyses inosine(in) = inosine(out). It catalyses the reaction adenosine(in) = adenosine(out). It carries out the reaction uridine(out) = uridine(in). The catalysed reaction is thymidine(in) = thymidine(out). The enzyme catalyses hypoxanthine(out) = hypoxanthine(in). It catalyses the reaction adenine(out) = adenine(in). It carries out the reaction cytidine(in) = cytidine(out). The catalysed reaction is thymine(out) = thymine(in). The enzyme catalyses uracil(in) = uracil(out). It catalyses the reaction guanine(out) = guanine(in). It carries out the reaction guanosine(in) = guanosine(out). Its function is as follows. Bidirectional uniporter involved in the facilitative transport of nucleosides and nucleobases, and contributes to maintaining their cellular homeostasis. Functions as a Na(+)-independent, passive transporter. Involved in the transport of nucleosides such as inosine, adenosine, uridine, thymidine, cytidine and guanosine. Also able to transport purine nucleobases (hypoxanthine, adenine, guanine) and pyrimidine nucleobases (thymine, uracil). Involved in nucleoside transport at basolateral membrane of kidney cells, allowing liver absorption of nucleoside metabolites. Mediates apical nucleoside uptake into Sertoli cells, thereby regulating the transport of nucleosides in testis across the blood-testis-barrier. Mediates both the influx and efflux of hypoxanthine in skeletal muscle microvascular endothelial cells to control the amount of intracellular hypoxanthine available for xanthine oxidase-mediated ROS production. The polypeptide is Equilibrative nucleoside transporter 2 (Mus musculus (Mouse)).